A 273-amino-acid chain; its full sequence is Putative phosphoenolpyruvate synthase regulatory protein (273 aa).

Residue 153–160 (AVSRAGKT) coordinates ADP.

This sequence belongs to the pyruvate, phosphate/water dikinase regulatory protein family. PSRP subfamily.

The enzyme catalyses [pyruvate, water dikinase] + ADP = [pyruvate, water dikinase]-phosphate + AMP + H(+). It carries out the reaction [pyruvate, water dikinase]-phosphate + phosphate + H(+) = [pyruvate, water dikinase] + diphosphate. In terms of biological role, bifunctional serine/threonine kinase and phosphorylase involved in the regulation of the phosphoenolpyruvate synthase (PEPS) by catalyzing its phosphorylation/dephosphorylation. This is Putative phosphoenolpyruvate synthase regulatory protein from Stenotrophomonas maltophilia (strain K279a).